Consider the following 2290-residue polypeptide: Autophagy-related protein 2 (2290 aa).

A Chorein N-terminal domain is found at 10–99 (WCKVMLQRYM…MCIEDLQLTF (90 aa)). The interval 829–1549 (DSMMKSVSAD…PNRDHSAFVV (721 aa)) is required for epg-6 binding. 4 disordered regions span residues 1678–1727 (IGSK…LGDL), 1805–1851 (DDLF…DLTG), 1898–1919 (SETE…PARN), and 1967–2003 (EHGN…ERNK). Residues 1681-1692 (KKTTPKTSVSSS) show a composition bias toward low complexity. Residues 1714 to 1723 (RPSPVQPPTP) are compositionally biased toward pro residues. A compositionally biased stretch (low complexity) spans 1810-1830 (QSYSSSSSETESESSAPQSSQ). Positions 1972 to 2011 (LDSIDNEDDNEKQKIEEEMEEDEKEEEEERNKEIQEAVER) form a coiled coil. Acidic residues predominate over residues 1988–1999 (EEMEEDEKEEEE).

This sequence belongs to the ATG2 family. Interacts with epg-6; the interaction is direct.

Its subcellular location is the preautophagosomal structure membrane. The protein localises to the lipid droplet. It localises to the endoplasmic reticulum membrane. It is found in the cytoplasm. It carries out the reaction a 1,2-diacyl-sn-glycero-3-phospho-L-serine(in) = a 1,2-diacyl-sn-glycero-3-phospho-L-serine(out). The catalysed reaction is a 1,2-diacyl-sn-glycero-3-phosphoethanolamine(in) = a 1,2-diacyl-sn-glycero-3-phosphoethanolamine(out). Its function is as follows. Lipid transfer protein involved in autophagosome assembly and in the distribution of atg-9 and atg-13 during the autophagy-mediated degradation of protein aggregates. Tethers the edge of the isolation membrane (IM) to the endoplasmic reticulum (ER) and mediates direct lipid transfer from ER to IM for IM expansion. Binds to the ER exit site (ERES), which is the membrane source for autophagosome formation, and extracts phospholipids from the membrane source to the IM for membrane expansion. Involved in autophagy-mediated degradation of ribosomal RNA and ribosomal proteins in lysosomes, which is essential for maintaining nucleotide homeostasis. This Caenorhabditis elegans protein is Autophagy-related protein 2.